A 260-amino-acid chain; its full sequence is Phosphonates import ATP-binding protein PhnC 2 (260 aa).

The ABC transporter domain maps to 4–245 (IQINKATKTY…KNTLRTIYQR (242 aa)). 37–44 (GPSGAGKS) serves as a coordination point for ATP.

The protein belongs to the ABC transporter superfamily. Phosphonates importer (TC 3.A.1.9.1) family. In terms of assembly, the complex is composed of two ATP-binding proteins (PhnC), two transmembrane proteins (PhnE) and a solute-binding protein (PhnD).

It is found in the cell inner membrane. The catalysed reaction is phosphonate(out) + ATP + H2O = phosphonate(in) + ADP + phosphate + H(+). In terms of biological role, part of the ABC transporter complex PhnCDE involved in phosphonates import. Responsible for energy coupling to the transport system. The polypeptide is Phosphonates import ATP-binding protein PhnC 2 (Trichodesmium erythraeum (strain IMS101)).